We begin with the raw amino-acid sequence, 923 residues long: DNA mismatch repair protein PMS1 (923 aa).

Composition is skewed to basic and acidic residues over residues 543-553 (DMTPSERDSEL), 565-581 (NVER…RFEE), and 591-601 (GDVERVSEDNP). The disordered stretch occupies residues 543-603 (DMTPSERDSE…ERVSEDNPRC (61 aa)).

It belongs to the DNA mismatch repair MutL/HexB family. As to quaternary structure, heterodimer of MLH1 and PMS1, called MutLalpha, which is the major MMR MutL activity correcting base-base mismatches as well as IDLs. The heterodimer binds double strand DNA independently of a mismatch with positive cooperativity and has more than one DNA binding site. Forms a ternary complex with either the MSH2-MSH6 (MutSalpha) or the MSH2-MSH3 heterodimer (MutSbeta), which recognize and bind to mismatch DNA. Ternary complex formation is promoted by ATP binding. As to expression, expressed at very low levels in mature leaves. Detected in rapidly dividing tissues.

The protein localises to the nucleus. Its function is as follows. Required for DNA mismatch repair (MMR), correcting base-base mismatches and insertion-deletion loops (IDLs) resulting from DNA replication, DNA damage or from recombination events between non-identical sequences during meiosis. Component of the MutLalpha heterodimer that forms a ternary complex with the MutS heterodimers, which initially recognize the DNA mismatches. This complex is thought to be responsible for directing the downstream MMR events, including strand discrimination, excision, and resynthesis. Plays a major role in maintaining the genetic stability of simple sequence repeats and in the repair of heteroduplex sites present in meiotic recombination intermediates. Does not seem to be required for homologous somatic recombination. The chain is DNA mismatch repair protein PMS1 (PMS1) from Arabidopsis thaliana (Mouse-ear cress).